We begin with the raw amino-acid sequence, 961 residues long: MAEAIGCTLNCSCQCFKPGKINHRQCEQCRHGWVAHALSKLRIPPVYPTSQVEIVQSNVVFDISSLMLYGTQAIPVRLKILLDRLFSVLKQDEVLQILHALDWTLQDYIRGYVLQDASGKVLDHWSIMTSEEEVATLQQFLRFGETKSIVELMAIQEKEEQSVIVPPTTANVDIRAFIESCGHRSASLPTPVDKGSPGGMHPFENLISNMTFMLPFQFFNPLPPALIGSLPEQYMLEQGQDQSQEPKQELHGPFSDSSFLTSTPFQVEKEQCLNCPETVPQKEDSAHLSDSSSYSIASKLERTQLSPEAKVKPERNSLSAKKGRVFCTACEKTFYDKGTLKIHYNAVHLKIKHKCTIEGCNMVFSSLRSRNRHSANPNPRLHMPMNRNNRDKDLRNSLNLASSETYKRPGFTVVSPDCGPLPGYTGSVEDSKGQPAFSSIGQNGVLFPNLKTVQPVLPFYRSPATPAELANTPGMLPSLPLLSSSIPEQLVSTDMPFDALPKKKSRKSSMPIKIEKEAVEIAEEKRHSLSSDDEVPLQVVSEDEPEDSSPRSDRVPEEQHTQLSLEEPLPQGERACHLESVIESHGALSRTLEQTTLTEREAEQKVALSSVMPREVEDGGHERHFTAGLVPQIPFPDYMELQQRLLAGGLFGALSNRGMAFPFLEESKELEHLGEHALVRQKEEARFQCDICKKTFKNACSMKTHEKNTHARETHACTVEGCGAAFPSRRSRDRHSSNLSLHQKVLNEEALETSEDHFRAAYLLQDVAKEAYQDVAFTPQASQTSVIFKGTSGMGSLVYPISQVHSASLESYNSGPPSEGTILDLSTTSSMKSESSSHSSWDSDGVSEEGTALMEDSDGNCEGQSLVSGEDEYPLCVLMEKADQSLASLPSGLPITCHLCQKIYSNKGTFRAHYKTVHLRQLHKCKVPGCNTMFSSVRSRNRHSQNPNLHKSLASSPSHLQ.

Residues 210–219 form a hydrophobic region; sequence MTFMLPFQFF. 2 consecutive C2H2-type zinc fingers follow at residues 325-348 and 353-382; these read VFCT…NAVH and HKCT…PRLH. Residues 370 to 393 are disordered; sequence RNRHSANPNPRLHMPMNRNNRDKD. The Nuclear localization signal motif lies at 501–507; it reads PKKKSRK. Serine 505 and serine 509 each carry phosphoserine. The interval 523 to 572 is disordered; that stretch reads EEKRHSLSSDDEVPLQVVSEDEPEDSSPRSDRVPEEQHTQLSLEEPLPQG. A compositionally biased stretch (acidic residues) spans 531 to 547; it reads SDDEVPLQVVSEDEPED. The segment covering 548 to 560 has biased composition (basic and acidic residues); the sequence is SSPRSDRVPEEQH. 2 consecutive C2H2-type zinc fingers follow at residues 687-711 and 715-743; these read FQCD…NTHA and HACT…SLHQ. Positions 810-864 are disordered; sequence ESYNSGPPSEGTILDLSTTSSMKSESSSHSSWDSDGVSEEGTALMEDSDGNCEGQ. Over residues 826–844 the composition is skewed to low complexity; that stretch reads STTSSMKSESSSHSSWDSD. 2 C2H2-type zinc fingers span residues 895 to 918 and 923 to 950; these read ITCH…KTVH and HKCK…PNLH. The segment at 937–961 is disordered; that stretch reads VRSRNRHSQNPNLHKSLASSPSHLQ.

In terms of assembly, interacts with HSF2BP (via C-terminus). In terms of processing, phosphorylation on Ser-505 and Ser-509 leads to cytoplasmic localization. Epidermis and germ cells of testis and ovary.

Its subcellular location is the nucleus. The protein resides in the cytoplasm. It localises to the nucleoplasm. Functionally, transcriptional activator. It is likely involved in the regulation of keratinocytes terminal differentiation in squamous epithelia and hair follicles. Required for the maintenance of spermatogenesis. It is involved in the positive regulation of oocyte maturation, probably acting through the control of BMP15 levels and regulation of AKT signaling cascade. May also play a role in the early development of embryos. This is Zinc finger protein basonuclin-1 (Bnc1) from Mus musculus (Mouse).